The sequence spans 191 residues: CASP-like protein 2U4 (191 aa).

At 1–25 the chain is on the cytoplasmic side; that stretch reads MGAYDGAEAPRAAPASTAANSRPSR. The chain crosses the membrane as a helical span at residues 26–46; sequence LLLLHSLLLRLVAVVLSILVI. Topologically, residues 47–68 are extracellular; the sequence is AVMVHAKQRVMIFKAEWDNSKA. A helical membrane pass occupies residues 69–89; sequence FVALVTISAICLGYSFLQFIL. Residues 90-114 are Cytoplasmic-facing; sequence SAFHLCSKSWKSPTKCWAWMNFIAD. The helical transmembrane segment at 115–135 threads the bilayer; that stretch reads QILTYAMLGAAAAAAELAYIA. The Extracellular segment spans residues 136 to 157; sequence KNGSSRAQWQPICSTFNTFCTR. Asn137 carries an N-linked (GlcNAc...) asparagine glycan. Residues 158-178 traverse the membrane as a helical segment; that stretch reads AGASIILSFIAVLALANSSAI. Over 179-191 the chain is Cytoplasmic; sequence SAYHLFRRPSSSV.

It belongs to the Casparian strip membrane proteins (CASP) family. Homodimer and heterodimers.

Its subcellular location is the cell membrane. The polypeptide is CASP-like protein 2U4 (Selaginella moellendorffii (Spikemoss)).